The following is a 328-amino-acid chain: UPF0421 protein SSP0904 (328 aa).

The next 4 membrane-spanning stretches (helical) occupy residues 26–46 (LFCL…IVTI), 61–81 (LPAT…FGDQ), 84–104 (FAYA…NLHV), and 132–152 (LLTA…ILPP).

It belongs to the UPF0421 family.

Its subcellular location is the cell membrane. The sequence is that of UPF0421 protein SSP0904 from Staphylococcus saprophyticus subsp. saprophyticus (strain ATCC 15305 / DSM 20229 / NCIMB 8711 / NCTC 7292 / S-41).